The primary structure comprises 502 residues: Glutamate--tRNA ligase (502 aa).

The short motif at 12 to 22 (PSPTGYLHVGG) is the 'HIGH' region element. Residues 259–263 (KLSKR) carry the 'KMSKS' region motif. Position 262 (Lys-262) interacts with ATP.

The protein belongs to the class-I aminoacyl-tRNA synthetase family. Glutamate--tRNA ligase type 1 subfamily. Monomer.

It is found in the cytoplasm. It carries out the reaction tRNA(Glu) + L-glutamate + ATP = L-glutamyl-tRNA(Glu) + AMP + diphosphate. Catalyzes the attachment of glutamate to tRNA(Glu) in a two-step reaction: glutamate is first activated by ATP to form Glu-AMP and then transferred to the acceptor end of tRNA(Glu). The protein is Glutamate--tRNA ligase of Pelodictyon phaeoclathratiforme (strain DSM 5477 / BU-1).